A 255-amino-acid chain; its full sequence is Small ribosomal subunit protein eS1 (255 aa).

Basic residues predominate over residues 1–18 (MAVGKNKRLSKGKKGLKK). A disordered region spans residues 1 to 28 (MAVGKNKRLSKGKKGLKKRTQDPFSRKD). Ala2 bears the N-acetylalanine; partial mark. Residues 19–28 (RTQDPFSRKD) are compositionally biased toward basic and acidic residues.

It belongs to the eukaryotic ribosomal protein eS1 family. As to quaternary structure, component of the small ribosomal subunit. Mature ribosomes consist of a small (40S) and a large (60S) subunit. The 40S subunit contains about 33 different proteins and 1 molecule of RNA (18S). The 60S subunit contains about 49 different proteins and 3 molecules of RNA (25S, 5.8S and 5S).

It localises to the cytoplasm. The polypeptide is Small ribosomal subunit protein eS1 (Ajellomyces capsulatus (strain NAm1 / WU24) (Darling's disease fungus)).